We begin with the raw amino-acid sequence, 968 residues long: Bifunctional glyoxylate cycle protein (968 aa).

The tract at residues 1 to 443 is isocitrate lyase; sequence MSSAAKNFYQ…AVASQDEEIL (443 aa). Residues 444–968 form a malate synthase region; it reads SLTAQNVAGD…AYDRLVSEGY (525 aa). R601 functions as the Proton acceptor in the catalytic mechanism. The Proton donor role is filled by D881.

In the N-terminal section; belongs to the isocitrate lyase/PEP mutase superfamily. Isocitrate lyase family. It in the C-terminal section; belongs to the malate synthase family. Intestinal and body wall muscle cells.

It carries out the reaction D-threo-isocitrate = glyoxylate + succinate. The catalysed reaction is glyoxylate + acetyl-CoA + H2O = (S)-malate + CoA + H(+). The protein operates within carbohydrate metabolism; glyoxylate cycle; (S)-malate from isocitrate: step 1/2. Its pathway is carbohydrate metabolism; glyoxylate cycle; (S)-malate from isocitrate: step 2/2. The chain is Bifunctional glyoxylate cycle protein (icl-1) from Caenorhabditis elegans.